The following is a 237-amino-acid chain: Phosphoribosylaminoimidazole-succinocarboxamide synthase (237 aa).

Belongs to the SAICAR synthetase family.

It carries out the reaction 5-amino-1-(5-phospho-D-ribosyl)imidazole-4-carboxylate + L-aspartate + ATP = (2S)-2-[5-amino-1-(5-phospho-beta-D-ribosyl)imidazole-4-carboxamido]succinate + ADP + phosphate + 2 H(+). It functions in the pathway purine metabolism; IMP biosynthesis via de novo pathway; 5-amino-1-(5-phospho-D-ribosyl)imidazole-4-carboxamide from 5-amino-1-(5-phospho-D-ribosyl)imidazole-4-carboxylate: step 1/2. The polypeptide is Phosphoribosylaminoimidazole-succinocarboxamide synthase (Halalkalibacterium halodurans (strain ATCC BAA-125 / DSM 18197 / FERM 7344 / JCM 9153 / C-125) (Bacillus halodurans)).